Here is a 598-residue protein sequence, read N- to C-terminus: Arginine--tRNA ligase (598 aa).

The short motif at 131-141 (ANPTGPMHVGH) is the 'HIGH' region element. The tract at residues 288–309 (KLPPPKSKKGQPPPQPQPDEEG) is disordered.

The protein belongs to the class-I aminoacyl-tRNA synthetase family. Monomer.

The protein localises to the cytoplasm. It carries out the reaction tRNA(Arg) + L-arginine + ATP = L-arginyl-tRNA(Arg) + AMP + diphosphate. This is Arginine--tRNA ligase from Anaeromyxobacter dehalogenans (strain 2CP-1 / ATCC BAA-258).